The following is a 178-amino-acid chain: Disulfide bond formation protein B (178 aa).

The Cytoplasmic portion of the chain corresponds to 1-16 (MTIFSSLNQFSKGHVS). A helical membrane pass occupies residues 17–33 (WLLLLLFIIFFEACALY). The Periplasmic portion of the chain corresponds to 34 to 51 (FQHVMMLAPCVMCIYERV). C43 and C46 are oxidised to a cystine. A helical transmembrane segment spans residues 52–67 (AMMGIGGAAIIGLIAP). The Cytoplasmic segment spans residues 68 to 74 (NNALFRW). The helical transmembrane segment at 75–92 (LGLIGWGLSSYKGLMLAM) threads the bilayer. At 93–147 (QHVDYQFNPSPFATCDLFVTFPSWAPLNQWVPWMFEAYGDCSKIVWQFFDLSMPQ) the chain is on the periplasmic side. A disulfide bond links C107 and C133. A helical transmembrane segment spans residues 148-166 (WLVVIFAGNLVALALIVIA). Residues 167–178 (QFFPVKRKNPIR) are Cytoplasmic-facing.

The protein belongs to the DsbB family.

The protein localises to the cell inner membrane. Its function is as follows. Required for disulfide bond formation in some periplasmic proteins. Acts by oxidizing the DsbA protein. In Vibrio parahaemolyticus serotype O3:K6 (strain RIMD 2210633), this protein is Disulfide bond formation protein B.